The primary structure comprises 154 residues: 6,7-dimethyl-8-ribityllumazine synthase (154 aa).

5-amino-6-(D-ribitylamino)uracil contacts are provided by residues Phe22, 56-58, and 80-82; these read AFE and AVI. Position 85–86 (85–86) interacts with (2S)-2-hydroxy-3-oxobutyl phosphate; that stretch reads AT. Residue His88 is the Proton donor of the active site. Position 113 (Phe113) interacts with 5-amino-6-(D-ribitylamino)uracil. Arg127 is a (2S)-2-hydroxy-3-oxobutyl phosphate binding site.

This sequence belongs to the DMRL synthase family. In terms of assembly, forms an icosahedral capsid composed of 60 subunits, arranged as a dodecamer of pentamers.

The enzyme catalyses (2S)-2-hydroxy-3-oxobutyl phosphate + 5-amino-6-(D-ribitylamino)uracil = 6,7-dimethyl-8-(1-D-ribityl)lumazine + phosphate + 2 H2O + H(+). It participates in cofactor biosynthesis; riboflavin biosynthesis; riboflavin from 2-hydroxy-3-oxobutyl phosphate and 5-amino-6-(D-ribitylamino)uracil: step 1/2. In terms of biological role, catalyzes the formation of 6,7-dimethyl-8-ribityllumazine by condensation of 5-amino-6-(D-ribitylamino)uracil with 3,4-dihydroxy-2-butanone 4-phosphate. This is the penultimate step in the biosynthesis of riboflavin. This Geobacillus thermodenitrificans (strain NG80-2) protein is 6,7-dimethyl-8-ribityllumazine synthase.